Here is a 257-residue protein sequence, read N- to C-terminus: Thioredoxin-dependent peroxide reductase, mitochondrial (257 aa).

The N-terminal 62 residues, Met1–His62, are a transit peptide targeting the mitochondrion. A Thioredoxin domain is found at Pro64–Phe222. Lys84 is modified (N6-succinyllysine). Lys92 carries the N6-acetyllysine; alternate modification. Lys92 bears the N6-succinyllysine; alternate mark. The active-site Cysteine sulfenic acid (-SOH) intermediate is Cys109. Position 147 is a phosphothreonine (Thr147).

Belongs to the peroxiredoxin family. AhpC/Prx1 subfamily. Homodimer; disulfide-linked, upon oxidation. 6 homodimers assemble to form a ring-like dodecamer. Interacts with NEK6. Interacts with LRRK2. Interacts with MAP3K13. Interacts with RPS6KC1 (via PX domain). Phosphorylated by LRRK2; phosphorylation reduces perodixase activity. In terms of processing, the enzyme can be inactivated by further oxidation of the cysteine sulfenic acid (C(P)-SOH) to sulphinic acid (C(P)-SO2H) and sulphonic acid (C(P)-SO3H) instead of its condensation to a disulfide bond. Post-translationally, S-palmitoylated. In terms of tissue distribution, housekeeping-type gene preferentially expressed in murine erythroleukemia (MEL) cells.

Its subcellular location is the mitochondrion. The protein localises to the cytoplasm. It is found in the early endosome. It catalyses the reaction a hydroperoxide + [thioredoxin]-dithiol = an alcohol + [thioredoxin]-disulfide + H2O. Thiol-specific peroxidase that catalyzes the reduction of hydrogen peroxide and organic hydroperoxides to water and alcohols, respectively. Plays a role in cell protection against oxidative stress by detoxifying peroxides. Acts synergistically with MAP3K13 to regulate the activation of NF-kappa-B in the cytosol. Required for the maintenance of physical strength. The protein is Thioredoxin-dependent peroxide reductase, mitochondrial (Prdx3) of Mus musculus (Mouse).